The sequence spans 1849 residues: Brefeldin A-inhibited guanine nucleotide-exchange protein 1 (1849 aa).

The segment at 2–224 (YEGKKTKNMF…QEAKQMEKER (223 aa)) is DCB; DCB:DCB domain and DCB:HUS domain interaction. The segment covering 46 to 58 (AETEKQSPPHGEA) has biased composition (basic and acidic residues). 4 disordered regions span residues 46–65 (AETEKQSPPHGEAKAGSSTL), 216–248 (EAKQMEKERHRQHHHLLQSPVSHHEPESPQLRY), 267–302 (LHTNDVDKSLQDDTEPENGSDISSAENEQTEADQAT), and 378–413 (TPISVAYTPSLPDDRLSVSSNDTQESGNSSGPSPGA). Ser-52 carries the phosphoserine modification. The span at 267 to 277 (LHTNDVDKSLQ) shows a compositional bias: basic and acidic residues. Phosphoserine occurs at positions 286, 289, 290, 397, and 410. Polar residues predominate over residues 394–409 (SVSSNDTQESGNSSGP). The HUS; DCB:HUS domain interaction stretch occupies residues 557 to 577 (ADAQSVVDIYVNYDCDLNAAN). Residues 709–840 (FNKKPKRGIQ…IIMLTTDLHS (132 aa)) enclose the SEC7 domain. Positions 711-715 (KKPKR) match the Nuclear localization signal (NLS) motif. The residue at position 1079 (Ser-1079) is a Phosphoserine. The disordered stretch occupies residues 1543 to 1562 (RPNSGETAPPPPSPVSEKPL). A phosphoserine mark is found at Ser-1566 and Ser-1569.

In terms of assembly, homodimer. Interacts with ARFGEF2/BIG2; both proteins are probably part of the same or very similar macromolecular complexes. Interacts with FKBP2. Interacts with MYO9B. Interacts with PRKAR1A and PRKAR2A. Interacts with PPP1CC. Interacts with NCL, FBL, NUP62 and U3 small nucleolar RNA. Interacts with DPY30. Interacts with PDE3A. Interacts with KANK1. Interacts with TBC1D22A and TBC1D22B. Interacts (via N-terminus) with ARL1. Phosphorylated. In vitro phosphorylated by PKA reducing its GEF activity and dephosphorylated by phosphatase PP1. As to expression, expressed in placenta, lung, heart, brain, kidney and pancreas.

The protein localises to the cytoplasm. Its subcellular location is the perinuclear region. The protein resides in the golgi apparatus. It localises to the trans-Golgi network membrane. It is found in the nucleus. The protein localises to the nucleolus. Its subcellular location is the nucleus matrix. With respect to regulation, inhibited by brefeldin A. Promotes guanine-nucleotide exchange on ARF1 and ARF3. Promotes the activation of ARF1/ARF3 through replacement of GDP with GTP. Involved in vesicular trafficking. Required for the maintenance of Golgi structure; the function may be independent of its GEF activity. Required for the maturation of integrin beta-1 in the Golgi. Involved in the establishment and persistence of cell polarity during directed cell movement in wound healing. Proposed to act as A kinase-anchoring protein (AKAP) and may mediate crosstalk between Arf and PKA pathways. Inhibits GAP activity of MYO9B probably through competitive RhoA binding. The function in the nucleus remains to be determined. The chain is Brefeldin A-inhibited guanine nucleotide-exchange protein 1 (ARFGEF1) from Homo sapiens (Human).